The following is a 389-amino-acid chain: MEVAGYGTHNRDLKQWMVTLLSALSLMMVVVTIGLLALFLVFDIQVNSNSGQKSSNQLKDLQETNENLVDEIFIDSALNNRYIKNHVVGLTPEEDDTKADIVMVFQPPATGRRTVGKKTHHSILDQKTRNARALPADVSLVQVKDCGKRAIPLIANRIVSGNPAAKGAWPWQVSLQRSNIHQCGGTLIGNMWVVTAAHCFRTNSNPRQWTLSFGTTINPPLMKRDVRRIIMHERYRPPARDHDIALVQFSPRVTFSDEVRRICLPEPSASFPPNSTVYITGFGALYYGGESQNELREARVQIISNDICKKRHVYGNEIKRGMFCAGFLEGNYDACRGDSGGPLVIRDNKDTWYLIGIVSWGDNCGQKNKPGVYTQVTYYRHWIASKTGL.

Residues 1–23 lie on the Cytoplasmic side of the membrane; the sequence is MEVAGYGTHNRDLKQWMVTLLSA. Residues 24 to 44 form a helical; Signal-anchor for type II membrane protein membrane-spanning segment; sequence LSLMMVVVTIGLLALFLVFDI. The SEA domain maps to 31-148; that stretch reads VTIGLLALFL…SLVQVKDCGK (118 aa). Over 45 to 389 the chain is Extracellular; that stretch reads QVNSNSGQKS…RHWIASKTGL (345 aa). A Peptidase S1 domain is found at 158-388; it reads IVSGNPAAKG…YRHWIASKTG (231 aa). A disulfide bridge links Cys-183 with Cys-199. Catalysis depends on charge relay system residues His-198 and Asp-243. N-linked (GlcNAc...) asparagine glycosylation occurs at Asn-274. Cystine bridges form between Cys-308–Cys-324 and Cys-335–Cys-364. Ser-339 serves as the catalytic Charge relay system.

Belongs to the peptidase S1 family.

Its subcellular location is the membrane. Its function is as follows. Probable serine protease which may play a role in cellular senescence. Overexpression inhibits cell growth and induce G1 cell cycle arrest. The sequence is that of Transmembrane protease serine 11A (Tmprss11a) from Mus musculus (Mouse).